We begin with the raw amino-acid sequence, 103 residues long: Large ribosomal subunit protein bL21 (103 aa).

Belongs to the bacterial ribosomal protein bL21 family. In terms of assembly, part of the 50S ribosomal subunit. Contacts protein L20.

In terms of biological role, this protein binds to 23S rRNA in the presence of protein L20. This chain is Large ribosomal subunit protein bL21, found in Vibrio parahaemolyticus serotype O3:K6 (strain RIMD 2210633).